The primary structure comprises 134 residues: Small ribosomal subunit protein uS11 (134 aa).

This sequence belongs to the universal ribosomal protein uS11 family. As to quaternary structure, part of the 30S ribosomal subunit. Interacts with proteins S7 and S18. Binds to IF-3.

Functionally, located on the platform of the 30S subunit, it bridges several disparate RNA helices of the 16S rRNA. Forms part of the Shine-Dalgarno cleft in the 70S ribosome. In Corynebacterium diphtheriae (strain ATCC 700971 / NCTC 13129 / Biotype gravis), this protein is Small ribosomal subunit protein uS11.